We begin with the raw amino-acid sequence, 456 residues long: MASFPPSLVFTVRRKEPTLVLPSKPTPRELKQLSDIDDQEGFRFQVPVIMFYKRKLYMEGEDPVKVIREALAEALVFYYPFAGRLIEGPNRKLVVDCTSEGVLFIEADADIELNQLIGDTIDPGTYLDELLHDVPGSEGIVGCPLLLIQVTRFRCGGWAFAIRLNHTMSDTLGLVQFLTTIAEFTRGAEDAPSVPPVWQREFLAARQPPFIPFQHHEYEQVIDTIPDDNKKSMTHKSFFFGPKEIRAIRSHLPHHHRSTSSTFDVLTACLWRCRTCALGLDPQMTVRISCAANGRGKHGLHVPRGYYGNVSAFPATVLRAGIISTSPLEYAMEGVKKAKAIMTGEYLRSVADLMVTKGRPRYTVAGNYIVSDMTRVGLDTIDFGWGKPVYGGPARAFPLISFYGRFKDNKGEDGTVVLICLPEAALERFQEELKKMTGEHVDGPFDYKPIKVVSKL.

Active-site proton acceptor residues include His166 and Asp382.

This sequence belongs to the plant acyltransferase family. Expressed in fruit.

In terms of biological role, involved in the biosynthesis of volatile esters which confer kiwifruit flavor. Alcohol acyl transferase that can use a wide range of alcohols as substrate to produce esters. The sequence is that of Alcohol acyltransferase 17 from Actinidia deliciosa (Kiwi).